A 116-amino-acid polypeptide reads, in one-letter code: Large ribosomal subunit protein bL19 (116 aa).

This sequence belongs to the bacterial ribosomal protein bL19 family.

Functionally, this protein is located at the 30S-50S ribosomal subunit interface and may play a role in the structure and function of the aminoacyl-tRNA binding site. This chain is Large ribosomal subunit protein bL19, found in Haemophilus influenzae (strain 86-028NP).